Reading from the N-terminus, the 448-residue chain is Methylenetetrahydrofolate--tRNA-(uracil-5-)-methyltransferase TrmFO (448 aa).

Residue Gly13–Gly18 participates in FAD binding.

It belongs to the MnmG family. TrmFO subfamily. The cofactor is FAD.

It localises to the cytoplasm. The catalysed reaction is uridine(54) in tRNA + (6R)-5,10-methylene-5,6,7,8-tetrahydrofolate + NADH + H(+) = 5-methyluridine(54) in tRNA + (6S)-5,6,7,8-tetrahydrofolate + NAD(+). It carries out the reaction uridine(54) in tRNA + (6R)-5,10-methylene-5,6,7,8-tetrahydrofolate + NADPH + H(+) = 5-methyluridine(54) in tRNA + (6S)-5,6,7,8-tetrahydrofolate + NADP(+). Functionally, catalyzes the folate-dependent formation of 5-methyl-uridine at position 54 (M-5-U54) in all tRNAs. This is Methylenetetrahydrofolate--tRNA-(uracil-5-)-methyltransferase TrmFO from Streptococcus pyogenes serotype M6 (strain ATCC BAA-946 / MGAS10394).